The sequence spans 162 residues: Peptide methionine sulfoxide reductase MsrA (162 aa).

Cysteine 16 is a catalytic residue.

Belongs to the MsrA Met sulfoxide reductase family.

It catalyses the reaction L-methionyl-[protein] + [thioredoxin]-disulfide + H2O = L-methionyl-(S)-S-oxide-[protein] + [thioredoxin]-dithiol. The enzyme catalyses [thioredoxin]-disulfide + L-methionine + H2O = L-methionine (S)-S-oxide + [thioredoxin]-dithiol. Its function is as follows. Has an important function as a repair enzyme for proteins that have been inactivated by oxidation. Catalyzes the reversible oxidation-reduction of methionine sulfoxide in proteins to methionine. This Geobacter metallireducens (strain ATCC 53774 / DSM 7210 / GS-15) protein is Peptide methionine sulfoxide reductase MsrA.